Reading from the N-terminus, the 222-residue chain is Eukaryotic translation initiation factor 3 subunit K (222 aa).

The region spanning 46–208 (YDLEANLAVL…KIKTKNITEK (163 aa)) is the PCI domain.

The protein belongs to the eIF-3 subunit K family. Component of the eukaryotic translation initiation factor 3 (eIF-3) complex. The eIF-3 complex interacts with pix.

Its subcellular location is the cytoplasm. Its function is as follows. Component of the eukaryotic translation initiation factor 3 (eIF-3) complex, which is involved in protein synthesis of a specialized repertoire of mRNAs and, together with other initiation factors, stimulates binding of mRNA and methionyl-tRNAi to the 40S ribosome. The eIF-3 complex specifically targets and initiates translation of a subset of mRNAs involved in cell proliferation. In Drosophila mojavensis (Fruit fly), this protein is Eukaryotic translation initiation factor 3 subunit K.